Reading from the N-terminus, the 392-residue chain is 8-amino-7-oxononanoate synthase (392 aa).

108 to 109 (GF) is a pyridoxal 5'-phosphate binding site. A substrate-binding site is contributed by His133. Pyridoxal 5'-phosphate is bound by residues Ser180, 205 to 208 (DDAH), and 236 to 239 (TLSK). Lys239 is subject to N6-(pyridoxal phosphate)lysine. Thr353 is a binding site for substrate.

The protein belongs to the class-II pyridoxal-phosphate-dependent aminotransferase family. BioF subfamily. Homodimer. Requires pyridoxal 5'-phosphate as cofactor.

It carries out the reaction 6-carboxyhexanoyl-[ACP] + L-alanine + H(+) = (8S)-8-amino-7-oxononanoate + holo-[ACP] + CO2. Its pathway is cofactor biosynthesis; biotin biosynthesis. In terms of biological role, catalyzes the decarboxylative condensation of pimeloyl-[acyl-carrier protein] and L-alanine to produce 8-amino-7-oxononanoate (AON), [acyl-carrier protein], and carbon dioxide. This is 8-amino-7-oxononanoate synthase from Bacillus pumilus (strain SAFR-032).